A 202-amino-acid chain; its full sequence is Mevalonate-3-phosphate 5-kinase (202 aa).

It catalyses the reaction (R)-3-phosphomevalonate + ATP = (R)-3,5-bisphosphomevalonate + ADP + H(+). Its pathway is isoprenoid biosynthesis; isopentenyl diphosphate biosynthesis via mevalonate pathway. Its function is as follows. Phosphorylates mevalonate 3-phosphate to form mevalonate 3,5-bisphosphate. Functions in an alternative mevalonate pathway, only present in extreme acidophiles of the Thermoplasmatales order, which passes through mevalonate 3-phosphate rather than mevalonate 5-phosphate. In Thermoplasma acidophilum (strain ATCC 25905 / DSM 1728 / JCM 9062 / NBRC 15155 / AMRC-C165), this protein is Mevalonate-3-phosphate 5-kinase.